An 875-amino-acid polypeptide reads, in one-letter code: MELITILEKTVSPDRLELEAAQKFLERAAVENLPTFLVELSRVLANPGNSQVARVAAGLQIRLLTSKDPDIKAQYQQRWLAIDANARREVKNYVLQTLGTETYRPSSASQCVAGIACAEIPVSQWPELIPQLVANVTNPNSTEHMKESTLEAIGYICQDIDPEQLQDKSNEILTAIIQGMRKEEPSNNVKLAATNALLNSLEFTKANFDKESERHFIMQVVCEATQCPDTRVRVAALQNLVKIMSLYYQYMETYMGPALFAITIEAMKSDIDEVALQGIEFWSNVCDEEMDLAIEASEAAEQGRPPEHTSKFYAKGALQYLVPILTQTLTKQDENDDDDDWNPCKAAGVCLMLLSTCCEDDIVPHVLPFIKEHIKNPDWRYRDAAVMAFGSILEGPEPNQLKPLVIQAMPTLIELMKDPSVVVRDTTAWTVGRICELLPEAAINDVYLAPLLQCLIEGLSAEPRVASNVCWAFSSLAEAAYEAADVADDQEEPATYCLSSSFELIVQKLLETTDRPDGHQNNLRSSAYESLMEIVKNSAKDCYPAVQKTTLVIMERLQQVLQMESHIQSTSDRIQFNDLQSLLCATLQNVLWKVQHQDALQISDVVMASLLRMFQSTAGSGGVQEDALMAVSTLVEVLGGEFLKYMEAFKPFLGIGLKNYAECQVCLAAVGLVGDLCRALQSNILPFCDEVMQLLLENLGNENVHRSVKPQILSVFGDITLAIGGEFKKYLEVVLNTLQQASQAQVDKSDFDMVDYLNELRESCLEAYTGIVQGLKGDQENVHPDVMLVQPRVEFILSFIDHIAGDEDHTDGVVACAAGLIGDLCTAFGKDVLKLVEARPMIHELLTEGRRSKTNKAKTLATWATKELRKLKNQA.

An N-acetylmethionine modification is found at M1. HEAT repeat units follow at residues 2–31 (ELITILEKTVSPDRLELEAAQKFLERAAVE), 33–64 (LPTFLVELSRVLANPGNSQVARVAAGLQIRLL), 84–122 (ANARREVKNYVLQTLGTETYRPSSASQCVAGIACAEIPV), 128–159 (LIPQLVANVTNPNSTEHMKESTLEAIGYICQD), and 169–201 (SNEILTAIIQGMRKEEPSNNVKLAATNALLNSL). S12 carries the post-translational modification Phosphoserine. One can recognise an Importin N-terminal domain in the interval 21–100 (AQKFLERAAV…KNYVLQTLGT (80 aa)). Residue K210 is modified to N6-acetyllysine. HEAT repeat units follow at residues 211–246 (ESERHFIMQVVCEATQCPDTRVRVAALQNLVKIMSL), 252–301 (ETYM…EAAE), 313–359 (YAKG…TCCE), 363–393 (VPHVLPFIKEHIKNPDWRYRDAAVMAFGSIL), 401–437 (LKPLVIQAMPTLIELMKDPSVVVRDTTAWTVGRICEL), 448–484 (LAPLLQCLIEGLSAEPRVASNVCWAFSSLAEAAYEAA), 499–536 (SSSFELIVQKLLETTDRPDGHQNNLRSSAYESLMEIVK), 543–591 (YPAV…QNVL), 599–638 (ALQISDVVMASLLRMFQSTAGSGGVQEDALMAVSTLVEVL), 643–680 (LKYMEAFKPFLGIGLKNYAECQVCLAAVGLVGDLCRAL), 685–723 (LPFCDEVMQLLLENLGNENVHRSVKPQILSVFGDITLAI), 731–775 (LEVV…VQGL), 785–828 (DVML…CTAF), and 830–872 (KDVL…RKLK). The essential for high affinity interaction with RPL23A stretch occupies residues 285 to 461 (VCDEEMDLAI…LQCLIEGLSA (177 aa)). The IAB-binding stretch occupies residues 328–341 (TLTKQDENDDDDDW). Residues 333-418 (DENDDDDDWN…MPTLIELMKD (86 aa)) form a ran-GTP binding region. 2 positions are modified to N6-acetyllysine: K834 and K866.

This sequence belongs to the importin beta family. Importin beta-1 subfamily. As to quaternary structure, forms a complex with an importin alpha subunit. Interacts with XPO1. Forms a heterodimer with IPO7. The KPNB1/IPO7 heterodimer interacts with H1 histone. Interacts with SNUPN. Interacts with H2A, H2B, H3 and H4 histones. Component of an import snRNP complex composed of KPNB1, SNUPN, SMN1 and ZNF259. Component of a nuclear export receptor complex composed of KPNB1, Ran, SNUPN and XPO1. Interacts with SRY. Interacts with PRKCI/atypical protein kinase C iota. Interacts with KPNA2. Interacts with KPNA7. Interacts with SNAI1 (via zinc fingers) and SNAI2 (via zinc fingers). Interacts with SLC35G1 and STIM1. Interacts with DCAF8. Interacts with RAN. Interacts with NUMA1 (via C-terminus); this interaction is inhibited by RanGTP. Interacts with ZBED1/hDREF; required for nuclear import of ZBED1/hDREF. Interacts with SRP19. Interacts with RPL23A (via BIB domain), RPS7 and RPL5. Mono-ADP-ribosylated by PARP16.

The protein resides in the cytoplasm. It localises to the nucleus envelope. Functions in nuclear protein import, either in association with an adapter protein, like an importin-alpha subunit, which binds to nuclear localization signals (NLS) in cargo substrates, or by acting as autonomous nuclear transport receptor. Acting autonomously, serves itself as NLS receptor. Docking of the importin/substrate complex to the nuclear pore complex (NPC) is mediated by KPNB1 through binding to nucleoporin FxFG repeats and the complex is subsequently translocated through the pore by an energy requiring, Ran-dependent mechanism. At the nucleoplasmic side of the NPC, Ran binds to importin-beta and the three components separate and importin-alpha and -beta are re-exported from the nucleus to the cytoplasm where GTP hydrolysis releases Ran from importin. The directionality of nuclear import is thought to be conferred by an asymmetric distribution of the GTP- and GDP-bound forms of Ran between the cytoplasm and nucleus. Mediates autonomously the nuclear import of ribosomal proteins RPL23A, RPS7 and RPL5. In association with IPO7, mediates the nuclear import of H1 histone. In vitro, mediates nuclear import of H2A, H2B, H3 and H4 histones. Imports MRTFA, SNAI1 and PRKCI into the nucleus. In Rattus norvegicus (Rat), this protein is Importin subunit beta-1 (Kpnb1).